Here is a 445-residue protein sequence, read N- to C-terminus: Phosphoglucosamine mutase (445 aa).

Residue S102 is the Phosphoserine intermediate of the active site. Mg(2+) contacts are provided by S102, D241, D243, and D245. S102 carries the phosphoserine modification.

Belongs to the phosphohexose mutase family. Mg(2+) serves as cofactor. In terms of processing, activated by phosphorylation.

The enzyme catalyses alpha-D-glucosamine 1-phosphate = D-glucosamine 6-phosphate. In terms of biological role, catalyzes the conversion of glucosamine-6-phosphate to glucosamine-1-phosphate. The protein is Phosphoglucosamine mutase of Citrobacter koseri (strain ATCC BAA-895 / CDC 4225-83 / SGSC4696).